A 338-amino-acid chain; its full sequence is Photosystem II assembly lipoprotein Ycf48 (338 aa).

The first 23 residues, 1-23 (MKRLFSNVINLTLVLIVGVALSG), serve as a signal peptide directing secretion. Residue Cys24 is the site of N-palmitoyl cysteine attachment. Cys24 is lipidated: S-diacylglycerol cysteine.

Belongs to the Ycf48 family. In terms of assembly, part of early PSII assembly complexes which includes D1 (psbA) and PsbI; not found in mature PSII. Binds to the lumenal side of PSII complexes. Interacts with YidC.

It localises to the cellular thylakoid membrane. A factor required for optimal assembly of photosystem II (PSII), acting in the early stages of PSII assembly. Also plays a role in replacement of photodamaged D1 (psbA). Assists YidC in synthesis of chlorophyll-binding proteins. The sequence is that of Photosystem II assembly lipoprotein Ycf48 from Prochlorococcus marinus (strain NATL2A).